The primary structure comprises 757 residues: Polyribonucleotide nucleotidyltransferase (757 aa).

Positions 489 and 495 each coordinate Mg(2+). In terms of domain architecture, KH spans 556-615; sequence PKILCYKIDKDVVHKVIGSGGKTIRGISSDTSAKIDIDQNNYVYIMADTEEALMEAKTRV. An S1 motif domain is found at 632–700; it reads GELYDGKIVS…SDGKIKLTMR (69 aa). Positions 702 to 757 are disordered; the sequence is DEDRVGSGGSSSSPKKRFGAHPRKNGKDNRSNNSERGFNERSGSAEGSSISRKRFF. A compositionally biased stretch (basic residues) spans 715-725; it reads PKKRFGAHPRK. A compositionally biased stretch (polar residues) spans 732–751; it reads SNNSERGFNERSGSAEGSSI.

It belongs to the polyribonucleotide nucleotidyltransferase family. The cofactor is Mg(2+).

The protein resides in the cytoplasm. The enzyme catalyses RNA(n+1) + phosphate = RNA(n) + a ribonucleoside 5'-diphosphate. Functionally, involved in mRNA degradation. Catalyzes the phosphorolysis of single-stranded polyribonucleotides processively in the 3'- to 5'-direction. This Neorickettsia sennetsu (strain ATCC VR-367 / Miyayama) (Ehrlichia sennetsu) protein is Polyribonucleotide nucleotidyltransferase.